Consider the following 510-residue polypeptide: tRNA-2-methylthio-N(6)-dimethylallyladenosine synthase (510 aa).

The disordered stretch occupies residues Met-1–Gly-25. The MTTase N-terminal domain maps to Arg-34 to His-154. [4Fe-4S] cluster contacts are provided by Cys-43, Cys-79, Cys-117, Cys-195, Cys-199, and Cys-202. The 234-residue stretch at Ala-181 to Ala-414 folds into the Radical SAM core domain. Positions Lys-417–Ala-479 constitute a TRAM domain. Residues Gln-484–Ala-493 are compositionally biased toward polar residues. The disordered stretch occupies residues Gln-484–Val-510.

Belongs to the methylthiotransferase family. MiaB subfamily. Monomer. [4Fe-4S] cluster is required as a cofactor.

The protein resides in the cytoplasm. It catalyses the reaction N(6)-dimethylallyladenosine(37) in tRNA + (sulfur carrier)-SH + AH2 + 2 S-adenosyl-L-methionine = 2-methylsulfanyl-N(6)-dimethylallyladenosine(37) in tRNA + (sulfur carrier)-H + 5'-deoxyadenosine + L-methionine + A + S-adenosyl-L-homocysteine + 2 H(+). Its function is as follows. Catalyzes the methylthiolation of N6-(dimethylallyl)adenosine (i(6)A), leading to the formation of 2-methylthio-N6-(dimethylallyl)adenosine (ms(2)i(6)A) at position 37 in tRNAs that read codons beginning with uridine. This is tRNA-2-methylthio-N(6)-dimethylallyladenosine synthase from Beijerinckia indica subsp. indica (strain ATCC 9039 / DSM 1715 / NCIMB 8712).